The chain runs to 645 residues: Acetyl-coenzyme A synthetase 2 (645 aa).

CoA is bound by residues 190–193 (RGGK), threonine 308, and asparagine 332. ATP-binding positions include 384–386 (GEP), 408–413 (DTWWQT), aspartate 497, and arginine 512. Residue serine 520 participates in CoA binding. Arginine 523 contributes to the ATP binding site. Mg(2+) is bound by residues valine 534, histidine 536, and valine 539. Lysine 606 is modified (N6-acetyllysine).

It belongs to the ATP-dependent AMP-binding enzyme family. Requires Mg(2+) as cofactor. Acetylated. Deacetylation by the SIR2-homolog deacetylase activates the enzyme.

The catalysed reaction is acetate + ATP + CoA = acetyl-CoA + AMP + diphosphate. Functionally, catalyzes the conversion of acetate into acetyl-CoA (AcCoA), an essential intermediate at the junction of anabolic and catabolic pathways. AcsA undergoes a two-step reaction. In the first half reaction, AcsA combines acetate with ATP to form acetyl-adenylate (AcAMP) intermediate. In the second half reaction, it can then transfer the acetyl group from AcAMP to the sulfhydryl group of CoA, forming the product AcCoA. This is Acetyl-coenzyme A synthetase 2 from Pseudomonas aeruginosa (strain ATCC 15692 / DSM 22644 / CIP 104116 / JCM 14847 / LMG 12228 / 1C / PRS 101 / PAO1).